Consider the following 201-residue polypeptide: Glycerol-3-phosphate acyltransferase (201 aa).

5 helical membrane-spanning segments follow: residues 10–30, 60–80, 86–106, 116–136, and 166–186; these read MLIG…GLIL, LAAA…LIAA, AAIA…WIGF, LGVL…AWIV, and ALAA…RANI.

The protein belongs to the PlsY family. Probably interacts with PlsX.

Its subcellular location is the cell inner membrane. The enzyme catalyses an acyl phosphate + sn-glycerol 3-phosphate = a 1-acyl-sn-glycero-3-phosphate + phosphate. Its pathway is lipid metabolism; phospholipid metabolism. Catalyzes the transfer of an acyl group from acyl-phosphate (acyl-PO(4)) to glycerol-3-phosphate (G3P) to form lysophosphatidic acid (LPA). This enzyme utilizes acyl-phosphate as fatty acyl donor, but not acyl-CoA or acyl-ACP. In Brucella abortus (strain 2308), this protein is Glycerol-3-phosphate acyltransferase.